The primary structure comprises 178 residues: Phosphopantetheine adenylyltransferase (178 aa).

Ser8 contacts substrate. ATP contacts are provided by residues 8–9 and His16; that span reads SF. 3 residues coordinate substrate: Lys40, Thr72, and Arg86. ATP-binding positions include 87–89, Glu97, and 122–128; these read GLR and YSFLSSS.

It belongs to the bacterial CoaD family. As to quaternary structure, homohexamer. The cofactor is Mg(2+).

It localises to the cytoplasm. The catalysed reaction is (R)-4'-phosphopantetheine + ATP + H(+) = 3'-dephospho-CoA + diphosphate. The protein operates within cofactor biosynthesis; coenzyme A biosynthesis; CoA from (R)-pantothenate: step 4/5. In terms of biological role, reversibly transfers an adenylyl group from ATP to 4'-phosphopantetheine, yielding dephospho-CoA (dPCoA) and pyrophosphate. This is Phosphopantetheine adenylyltransferase from Picosynechococcus sp. (strain ATCC 27264 / PCC 7002 / PR-6) (Agmenellum quadruplicatum).